The sequence spans 223 residues: Ribose-5-phosphate isomerase A (223 aa).

Substrate is bound by residues 28–31 (TGST), 81–84 (DGAD), and 94–97 (KGGG). Glu103 serves as the catalytic Proton acceptor. Lys121 is a substrate binding site.

It belongs to the ribose 5-phosphate isomerase family. In terms of assembly, homodimer.

The catalysed reaction is aldehydo-D-ribose 5-phosphate = D-ribulose 5-phosphate. It participates in carbohydrate degradation; pentose phosphate pathway; D-ribose 5-phosphate from D-ribulose 5-phosphate (non-oxidative stage): step 1/1. Its function is as follows. Catalyzes the reversible conversion of ribose-5-phosphate to ribulose 5-phosphate. The polypeptide is Ribose-5-phosphate isomerase A (Janthinobacterium sp. (strain Marseille) (Minibacterium massiliensis)).